The sequence spans 607 residues: Elongation factor 4 (607 aa).

Residues 11–193 (EKIRNFSIIA…QIVEKVPAPT (183 aa)) form the tr-type G domain. Residues 23–28 (DHGKST) and 140–143 (NKID) contribute to the GTP site.

This sequence belongs to the TRAFAC class translation factor GTPase superfamily. Classic translation factor GTPase family. LepA subfamily.

It is found in the cell membrane. The enzyme catalyses GTP + H2O = GDP + phosphate + H(+). Required for accurate and efficient protein synthesis under certain stress conditions. May act as a fidelity factor of the translation reaction, by catalyzing a one-codon backward translocation of tRNAs on improperly translocated ribosomes. Back-translocation proceeds from a post-translocation (POST) complex to a pre-translocation (PRE) complex, thus giving elongation factor G a second chance to translocate the tRNAs correctly. Binds to ribosomes in a GTP-dependent manner. This chain is Elongation factor 4, found in Streptococcus pneumoniae serotype 19F (strain G54).